A 142-amino-acid chain; its full sequence is Putative pre-16S rRNA nuclease (142 aa).

Belongs to the YqgF nuclease family.

Its subcellular location is the cytoplasm. Its function is as follows. Could be a nuclease involved in processing of the 5'-end of pre-16S rRNA. This Lactobacillus acidophilus (strain ATCC 700396 / NCK56 / N2 / NCFM) protein is Putative pre-16S rRNA nuclease.